A 274-amino-acid polypeptide reads, in one-letter code: Undecaprenyl-diphosphatase (274 aa).

Helical transmembrane passes span 4-24, 41-61, 83-103, 108-128, 184-204, 218-238, and 246-266; these read PLFV…FLPI, DATS…AVCW, FVGL…MFHS, LLFN…LILW, AAEF…VYDL, VFAI…KAFI, and FIAF…TWQL.

This sequence belongs to the UppP family.

It is found in the cell inner membrane. The catalysed reaction is di-trans,octa-cis-undecaprenyl diphosphate + H2O = di-trans,octa-cis-undecaprenyl phosphate + phosphate + H(+). Its function is as follows. Catalyzes the dephosphorylation of undecaprenyl diphosphate (UPP). Confers resistance to bacitracin. The polypeptide is Undecaprenyl-diphosphatase (Aromatoleum aromaticum (strain DSM 19018 / LMG 30748 / EbN1) (Azoarcus sp. (strain EbN1))).